The chain runs to 163 residues: Epididymal-specific lipocalin-6 (163 aa).

Residues 1 to 20 (MGGLLLAAFLALVSVPRAQA) form the signal peptide.

It belongs to the calycin superfamily. Lipocalin family. As to expression, predominantly expressed in epididymis.

It is found in the secreted. In terms of biological role, may play a role in male fertility. This is Epididymal-specific lipocalin-6 (LCN6) from Homo sapiens (Human).